Reading from the N-terminus, the 100-residue chain is uncharacterized protein (100 aa).

A signal peptide spans 1–26 (MKRLLVSLRVWMVFLMNWVTPDRKTA).

This is an uncharacterized protein from Bacillus subtilis (strain 168).